The chain runs to 220 residues: Protein DGCR6L (220 aa).

Residues 76–159 (KSLYNQRLRL…ADQQSTLEKA (84 aa)) adopt a coiled-coil conformation.

The protein belongs to the gonadal family. In terms of tissue distribution, widely expressed in fetal and adult tissues. Highest expression in liver, heart and skeletal muscle. Lower levels in pancreas and placenta. Weak expression in brain.

The protein resides in the nucleus. May play a role in neural crest cell migration into the third and fourth pharyngeal pouches. This Homo sapiens (Human) protein is Protein DGCR6L (DGCR6L).